The following is a 400-amino-acid chain: Hyaluronan and proteoglycan link protein 4 (400 aa).

Residues 1–30 (MACAPGALGHRALWAVAWGLLLLVPVLAGA) form the signal peptide. Positions 47–155 (SVVVQTAPGQ…VTNELEDDVG (109 aa)) constitute an Ig-like C2-type domain. 5 cysteine pairs are disulfide-bonded: cysteine 69-cysteine 144, cysteine 186-cysteine 264, cysteine 210-cysteine 231, cysteine 291-cysteine 361, and cysteine 316-cysteine 337. Asparagine 133 is a glycosylation site (N-linked (GlcNAc...) asparagine). Link domains follow at residues 164 to 266 (VVFP…FCFT) and 271 to 363 (GRVF…YCYR).

Belongs to the HAPLN family. Expressed predominantly in brain where it is found mainly throughout the midbrain and hindbrain in a perineuronal net pattern.

It localises to the secreted. The protein resides in the extracellular space. It is found in the extracellular matrix. In terms of biological role, essential for the proper localization of brevican (BCAN), mainly as a perineuronal nets (PNNs)-type deposition in the brainstem and cerebellum thereby playing a key role in the formation and structural organization of PNNs. Contributes to the formation and transmission of inhibitory GABAergic synapses between Purkinje cells and deep cerebellar nuclei neurons. The protein is Hyaluronan and proteoglycan link protein 4 (Hapln4) of Mus musculus (Mouse).